Consider the following 516-residue polypeptide: Na(+)/H(+) antiporter NhaB (516 aa).

The next 12 helical transmembrane spans lie at 23-43 (LALI…PFVA), 61-80 (CYPL…IGMT), 97-117 (LLLI…LFVF), 120-140 (LLLG…AAAF), 144-164 (FLDA…FYGI), 202-222 (LMMH…VGEP), 238-258 (FFIR…LTCL), 303-323 (AVIG…VGLI), 348-368 (TEAL…AVII), 391-411 (LFYL…VGTV), 447-467 (ATPN…APLI), and 475-495 (VWMA…CVEF).

This sequence belongs to the NhaB Na(+)/H(+) (TC 2.A.34) antiporter family.

The protein localises to the cell inner membrane. It catalyses the reaction 2 Na(+)(in) + 3 H(+)(out) = 2 Na(+)(out) + 3 H(+)(in). Functionally, na(+)/H(+) antiporter that extrudes sodium in exchange for external protons. The sequence is that of Na(+)/H(+) antiporter NhaB from Klebsiella pneumoniae (strain 342).